The sequence spans 211 residues: Ion-translocating oxidoreductase complex subunit G (211 aa).

The chain crosses the membrane as a helical span at residues 9 to 29 (GLTLAIFACATTGLVALTQYL). At threonine 175 the chain carries FMN phosphoryl threonine.

Belongs to the RnfG family. In terms of assembly, the complex is composed of six subunits: RnfA, RnfB, RnfC, RnfD, RnfE and RnfG. It depends on FMN as a cofactor.

The protein resides in the cell inner membrane. Its function is as follows. Part of a membrane-bound complex that couples electron transfer with translocation of ions across the membrane. This is Ion-translocating oxidoreductase complex subunit G from Vibrio parahaemolyticus serotype O3:K6 (strain RIMD 2210633).